A 101-amino-acid chain; its full sequence is NAD(P)H-quinone oxidoreductase subunit 4L, chloroplastic (101 aa).

Transmembrane regions (helical) follow at residues 2 to 22 (MLEH…YGLI), 32 to 52 (MCLE…SDFF), and 61 to 81 (IFSI…SAIV).

This sequence belongs to the complex I subunit 4L family. As to quaternary structure, NDH is composed of at least 16 different subunits, 5 of which are encoded in the nucleus.

It localises to the plastid. The protein localises to the chloroplast thylakoid membrane. The enzyme catalyses a plastoquinone + NADH + (n+1) H(+)(in) = a plastoquinol + NAD(+) + n H(+)(out). It carries out the reaction a plastoquinone + NADPH + (n+1) H(+)(in) = a plastoquinol + NADP(+) + n H(+)(out). NDH shuttles electrons from NAD(P)H:plastoquinone, via FMN and iron-sulfur (Fe-S) centers, to quinones in the photosynthetic chain and possibly in a chloroplast respiratory chain. The immediate electron acceptor for the enzyme in this species is believed to be plastoquinone. Couples the redox reaction to proton translocation, and thus conserves the redox energy in a proton gradient. This is NAD(P)H-quinone oxidoreductase subunit 4L, chloroplastic from Gossypium hirsutum (Upland cotton).